A 715-amino-acid polypeptide reads, in one-letter code: Probable GTP diphosphokinase RSH3, chloroplastic (715 aa).

The transit peptide at Met1–Ser64 directs the protein to the chloroplast. Residues Ser65–Ser74 show a composition bias toward low complexity. The tract at residues Ser65–His84 is disordered. The 105-residue stretch at Tyr237–Met341 folds into the HD domain.

The protein belongs to the RelA/SpoT family. In terms of tissue distribution, expressed in roots, hypocotyls, shoots, cotyledons, rosette and cauline leaves, stems, petals, sepals, stamens, pistils and siliques.

It localises to the plastid. The protein resides in the chloroplast. It catalyses the reaction GTP + ATP = guanosine 3'-diphosphate 5'-triphosphate + AMP. In terms of biological role, possesses ppGpp (guanosine 3'-diphosphate 5'-diphosphate) synthetase activity in vitro and is able to functionally complement E.coli relA mutants. May be involved in a rapid plant ppGpp-mediated response to pathogens and other stresses. This is Probable GTP diphosphokinase RSH3, chloroplastic (RSH3) from Arabidopsis thaliana (Mouse-ear cress).